Consider the following 501-residue polypeptide: Glycerol kinase (501 aa).

Thr11 contacts ADP. ATP contacts are provided by Thr11, Thr12, and Ser13. A sn-glycerol 3-phosphate-binding site is contributed by Thr11. Arg15 lines the ADP pocket. Residues Arg81, Glu82, Tyr133, and Asp242 each contribute to the sn-glycerol 3-phosphate site. The glycerol site is built by Arg81, Glu82, Tyr133, Asp242, and Gln243. ADP is bound by residues Thr264 and Gly307. Residues Thr264, Gly307, Gln311, and Gly409 each coordinate ATP. ADP-binding residues include Gly409 and Asn413.

The protein belongs to the FGGY kinase family.

The enzyme catalyses glycerol + ATP = sn-glycerol 3-phosphate + ADP + H(+). The protein operates within polyol metabolism; glycerol degradation via glycerol kinase pathway; sn-glycerol 3-phosphate from glycerol: step 1/1. Inhibited by fructose 1,6-bisphosphate (FBP). Its function is as follows. Key enzyme in the regulation of glycerol uptake and metabolism. Catalyzes the phosphorylation of glycerol to yield sn-glycerol 3-phosphate. This Borrelia garinii subsp. bavariensis (strain ATCC BAA-2496 / DSM 23469 / PBi) (Borreliella bavariensis) protein is Glycerol kinase.